The following is a 921-amino-acid chain: TRPM8 channel-associated factor 1 (921 aa).

Positions Y542 to G841 constitute a Peptidase M60 domain.

This sequence belongs to the TCAF family. In terms of assembly, interacts with TRPM8 (via N-terminus and C-terminus domains); the interaction inhibits TRPM8 channel activity. Interacts with TRPV6.

The protein localises to the cell membrane. Positively regulates the plasma membrane cation channel TRPM8 activity. Involved in the recruitment of TRPM8 to the cell surface. Promotes prostate cancer cell migration inhibition in a TRPM8-dependent manner. This Pongo abelii (Sumatran orangutan) protein is TRPM8 channel-associated factor 1.